We begin with the raw amino-acid sequence, 124 residues long: UPF0102 protein Noca_3248 (124 aa).

Belongs to the UPF0102 family.

The protein is UPF0102 protein Noca_3248 of Nocardioides sp. (strain ATCC BAA-499 / JS614).